The following is a 374-amino-acid chain: Putative glutamate--cysteine ligase 2-1 (374 aa).

This sequence belongs to the glutamate--cysteine ligase type 2 family. YbdK subfamily.

The catalysed reaction is L-cysteine + L-glutamate + ATP = gamma-L-glutamyl-L-cysteine + ADP + phosphate + H(+). ATP-dependent carboxylate-amine ligase which exhibits weak glutamate--cysteine ligase activity. The chain is Putative glutamate--cysteine ligase 2-1 from Saccharopolyspora erythraea (strain ATCC 11635 / DSM 40517 / JCM 4748 / NBRC 13426 / NCIMB 8594 / NRRL 2338).